We begin with the raw amino-acid sequence, 388 residues long: Chorismate synthase (388 aa).

2 residues coordinate NADP(+): Arg-39 and Arg-45. FMN contacts are provided by residues 132 to 134 (RSS), 251 to 252 (NA), Gly-296, 311 to 315 (KPIPT), and Arg-337.

Homotetramer. It depends on FMNH2 as a cofactor.

The enzyme catalyses 5-O-(1-carboxyvinyl)-3-phosphoshikimate = chorismate + phosphate. The protein operates within metabolic intermediate biosynthesis; chorismate biosynthesis; chorismate from D-erythrose 4-phosphate and phosphoenolpyruvate: step 7/7. In terms of biological role, catalyzes the anti-1,4-elimination of the C-3 phosphate and the C-6 proR hydrogen from 5-enolpyruvylshikimate-3-phosphate (EPSP) to yield chorismate, which is the branch point compound that serves as the starting substrate for the three terminal pathways of aromatic amino acid biosynthesis. This reaction introduces a second double bond into the aromatic ring system. In Staphylococcus aureus, this protein is Chorismate synthase.